The following is a 95-amino-acid chain: Aspartyl/glutamyl-tRNA(Asn/Gln) amidotransferase subunit C (95 aa).

The protein belongs to the GatC family. Heterotrimer of A, B and C subunits.

It catalyses the reaction L-glutamyl-tRNA(Gln) + L-glutamine + ATP + H2O = L-glutaminyl-tRNA(Gln) + L-glutamate + ADP + phosphate + H(+). The enzyme catalyses L-aspartyl-tRNA(Asn) + L-glutamine + ATP + H2O = L-asparaginyl-tRNA(Asn) + L-glutamate + ADP + phosphate + 2 H(+). In terms of biological role, allows the formation of correctly charged Asn-tRNA(Asn) or Gln-tRNA(Gln) through the transamidation of misacylated Asp-tRNA(Asn) or Glu-tRNA(Gln) in organisms which lack either or both of asparaginyl-tRNA or glutaminyl-tRNA synthetases. The reaction takes place in the presence of glutamine and ATP through an activated phospho-Asp-tRNA(Asn) or phospho-Glu-tRNA(Gln). This is Aspartyl/glutamyl-tRNA(Asn/Gln) amidotransferase subunit C from Campylobacter curvus (strain 525.92).